A 96-amino-acid chain; its full sequence is Co-chaperonin GroES (96 aa).

The protein belongs to the GroES chaperonin family. Heptamer of 7 subunits arranged in a ring. Interacts with the chaperonin GroEL.

The protein localises to the cytoplasm. Its function is as follows. Together with the chaperonin GroEL, plays an essential role in assisting protein folding. The GroEL-GroES system forms a nano-cage that allows encapsulation of the non-native substrate proteins and provides a physical environment optimized to promote and accelerate protein folding. GroES binds to the apical surface of the GroEL ring, thereby capping the opening of the GroEL channel. The protein is Co-chaperonin GroES of Teredinibacter turnerae (strain ATCC 39867 / T7901).